Consider the following 259-residue polypeptide: Thiazole synthase (259 aa).

Catalysis depends on K100, which acts as the Schiff-base intermediate with DXP. Residues G161, 187–188 (AG), and 209–210 (NT) each bind 1-deoxy-D-xylulose 5-phosphate.

It belongs to the ThiG family. Homotetramer. Forms heterodimers with either ThiH or ThiS.

Its subcellular location is the cytoplasm. It catalyses the reaction [ThiS sulfur-carrier protein]-C-terminal-Gly-aminoethanethioate + 2-iminoacetate + 1-deoxy-D-xylulose 5-phosphate = [ThiS sulfur-carrier protein]-C-terminal Gly-Gly + 2-[(2R,5Z)-2-carboxy-4-methylthiazol-5(2H)-ylidene]ethyl phosphate + 2 H2O + H(+). Its pathway is cofactor biosynthesis; thiamine diphosphate biosynthesis. Its function is as follows. Catalyzes the rearrangement of 1-deoxy-D-xylulose 5-phosphate (DXP) to produce the thiazole phosphate moiety of thiamine. Sulfur is provided by the thiocarboxylate moiety of the carrier protein ThiS. In vitro, sulfur can be provided by H(2)S. The polypeptide is Thiazole synthase (Methylobacillus flagellatus (strain ATCC 51484 / DSM 6875 / VKM B-1610 / KT)).